Here is a 412-residue protein sequence, read N- to C-terminus: Serine hydroxymethyltransferase (412 aa).

Residues Leu117 and 121–123 (GHL) each bind (6S)-5,6,7,8-tetrahydrofolate. Lys226 is modified (N6-(pyridoxal phosphate)lysine).

It belongs to the SHMT family. As to quaternary structure, homodimer. It depends on pyridoxal 5'-phosphate as a cofactor.

It localises to the cytoplasm. It carries out the reaction (6R)-5,10-methylene-5,6,7,8-tetrahydrofolate + glycine + H2O = (6S)-5,6,7,8-tetrahydrofolate + L-serine. It functions in the pathway one-carbon metabolism; tetrahydrofolate interconversion. It participates in amino-acid biosynthesis; glycine biosynthesis; glycine from L-serine: step 1/1. Functionally, catalyzes the reversible interconversion of serine and glycine with tetrahydrofolate (THF) serving as the one-carbon carrier. This reaction serves as the major source of one-carbon groups required for the biosynthesis of purines, thymidylate, methionine, and other important biomolecules. Also exhibits THF-independent aldolase activity toward beta-hydroxyamino acids, producing glycine and aldehydes, via a retro-aldol mechanism. The polypeptide is Serine hydroxymethyltransferase (Staphylococcus aureus (strain MW2)).